The sequence spans 427 residues: Transcobalamin-2 (427 aa).

An N-terminal signal peptide occupies residues 1–18 (MRHLGAFLFLLGVLGALT). 4 disulfide bridges follow: cysteine 21-cysteine 267, cysteine 83-cysteine 96, cysteine 116-cysteine 309, and cysteine 165-cysteine 205. Cob(II)alamin contacts are provided by residues glutamine 104, 152 to 156 (TSYYQ), histidine 190, 190 to 194 (HHSVD), asparagine 242, serine 245, glutamine 291, and 395 to 397 (WQL).

The protein belongs to the eukaryotic cobalamin transport proteins family. Interacts with CD320 (via LDL-receptor class A domains).

The protein resides in the secreted. Functionally, primary vitamin B12-binding and transport protein. Delivers cobalamin to cells. The sequence is that of Transcobalamin-2 (TCN2) from Homo sapiens (Human).